We begin with the raw amino-acid sequence, 130 residues long: MGIVGVGIDLVSIPDFAEQVSQPGTVFMTIFTPGERRDASVKSSSAVCHLAARWAVKEAVIKAWSGSRFAQRPMLPENIHRDIEVVNDMWGRPRVRLTGAIAKHLTDVTIHVSLTHEGDIAAAVVILEVL.

Residues Asp-9 and Glu-58 each coordinate Mg(2+).

It belongs to the P-Pant transferase superfamily. AcpS family. Mg(2+) serves as cofactor.

It localises to the cytoplasm. The enzyme catalyses apo-[ACP] + CoA = holo-[ACP] + adenosine 3',5'-bisphosphate + H(+). In terms of biological role, transfers the 4'-phosphopantetheine moiety from coenzyme A to a Ser of acyl-carrier-protein. The protein is Holo-[acyl-carrier-protein] synthase of Mycobacterium leprae (strain Br4923).